The chain runs to 56 residues: Large ribosomal subunit protein bL32 (56 aa).

Basic residues predominate over residues 1 to 16; sequence MAVQKSKKSRARRGMR. Residues 1–56 form a disordered region; that stretch reads MAVQKSKKSRARRGMRRSHDAISGPSLTVDQTSGETHRRHHVTADGYYKGVQVISK. A compositionally biased stretch (polar residues) spans 25 to 34; it reads PSLTVDQTSG.

It belongs to the bacterial ribosomal protein bL32 family.

This is Large ribosomal subunit protein bL32 from Pseudoalteromonas translucida (strain TAC 125).